Reading from the N-terminus, the 192-residue chain is Ion-translocating oxidoreductase complex subunit A (192 aa).

A run of 6 helical transmembrane segments spans residues 5-25 (LLLL…FLGL), 39-59 (IGMS…SYLV), 65-85 (LPFD…AVVV), 102-122 (ALGI…VALL), 134-154 (AIFG…FSAM), and 171-191 (AIAM…TGLV).

The protein belongs to the NqrDE/RnfAE family. The complex is composed of six subunits: RnfA, RnfB, RnfC, RnfD, RnfE and RnfG.

Its subcellular location is the cell inner membrane. Functionally, part of a membrane-bound complex that couples electron transfer with translocation of ions across the membrane. The sequence is that of Ion-translocating oxidoreductase complex subunit A from Shewanella baltica (strain OS223).